Here is a 570-residue protein sequence, read N- to C-terminus: Hydroxylamine reductase (570 aa).

Positions 5, 8, 17, and 23 each coordinate [4Fe-4S] cluster. Hybrid [4Fe-2O-2S] cluster is bound by residues His-266, Glu-290, Cys-334, Cys-425, Cys-453, Cys-478, Glu-513, and Lys-515. A Cysteine persulfide modification is found at Cys-425.

Belongs to the HCP family. It depends on [4Fe-4S] cluster as a cofactor. Requires hybrid [4Fe-2O-2S] cluster as cofactor.

It is found in the cytoplasm. The catalysed reaction is A + NH4(+) + H2O = hydroxylamine + AH2 + H(+). In terms of biological role, catalyzes the reduction of hydroxylamine to form NH(3) and H(2)O. The polypeptide is Hydroxylamine reductase (Clostridium tetani (strain Massachusetts / E88)).